Reading from the N-terminus, the 144-residue chain is D-aminoacyl-tRNA deacylase (144 aa).

The short motif at 136-137 is the Gly-cisPro motif, important for rejection of L-amino acids element; the sequence is GP.

The protein belongs to the DTD family. In terms of assembly, homodimer.

The protein resides in the cytoplasm. It carries out the reaction glycyl-tRNA(Ala) + H2O = tRNA(Ala) + glycine + H(+). The enzyme catalyses a D-aminoacyl-tRNA + H2O = a tRNA + a D-alpha-amino acid + H(+). Its function is as follows. An aminoacyl-tRNA editing enzyme that deacylates mischarged D-aminoacyl-tRNAs. Also deacylates mischarged glycyl-tRNA(Ala), protecting cells against glycine mischarging by AlaRS. Acts via tRNA-based rather than protein-based catalysis; rejects L-amino acids rather than detecting D-amino acids in the active site. By recycling D-aminoacyl-tRNA to D-amino acids and free tRNA molecules, this enzyme counteracts the toxicity associated with the formation of D-aminoacyl-tRNA entities in vivo and helps enforce protein L-homochirality. The sequence is that of D-aminoacyl-tRNA deacylase from Glaesserella parasuis serovar 5 (strain SH0165) (Haemophilus parasuis).